We begin with the raw amino-acid sequence, 435 residues long: Enolase (435 aa).

Residue glutamine 163 participates in (2R)-2-phosphoglycerate binding. Residue glutamate 205 is the Proton donor of the active site. 3 residues coordinate Mg(2+): aspartate 243, glutamate 292, and aspartate 319. (2R)-2-phosphoglycerate contacts are provided by lysine 344, arginine 373, serine 374, and lysine 395. The active-site Proton acceptor is lysine 344.

Belongs to the enolase family. Mg(2+) is required as a cofactor.

Its subcellular location is the cytoplasm. It is found in the secreted. The protein localises to the cell surface. The enzyme catalyses (2R)-2-phosphoglycerate = phosphoenolpyruvate + H2O. It functions in the pathway carbohydrate degradation; glycolysis; pyruvate from D-glyceraldehyde 3-phosphate: step 4/5. In terms of biological role, catalyzes the reversible conversion of 2-phosphoglycerate (2-PG) into phosphoenolpyruvate (PEP). It is essential for the degradation of carbohydrates via glycolysis. This is Enolase from Streptococcus uberis (strain ATCC BAA-854 / 0140J).